The primary structure comprises 295 residues: UDP-N-acetylenolpyruvoylglucosamine reductase (295 aa).

The 164-residue stretch at 26–189 (VGGQADILFK…IEAEFKGVSS (164 aa)) folds into the FAD-binding PCMH-type domain. The active site involves arginine 169. Cysteine 218 functions as the Proton donor in the catalytic mechanism. Glutamate 288 is an active-site residue.

Belongs to the MurB family. It depends on FAD as a cofactor.

It is found in the cytoplasm. It catalyses the reaction UDP-N-acetyl-alpha-D-muramate + NADP(+) = UDP-N-acetyl-3-O-(1-carboxyvinyl)-alpha-D-glucosamine + NADPH + H(+). It participates in cell wall biogenesis; peptidoglycan biosynthesis. Its function is as follows. Cell wall formation. This chain is UDP-N-acetylenolpyruvoylglucosamine reductase, found in Wolbachia sp. subsp. Brugia malayi (strain TRS).